A 1176-amino-acid chain; its full sequence is DNA-directed RNA polymerase subunit beta (1176 aa).

Positions T13–V30 are enriched in polar residues. Residues T13–N35 form a disordered region.

The protein belongs to the RNA polymerase beta chain family. The RNAP catalytic core consists of 2 alpha, 1 beta, 1 beta' and 1 omega subunit. When a sigma factor is associated with the core the holoenzyme is formed, which can initiate transcription.

The enzyme catalyses RNA(n) + a ribonucleoside 5'-triphosphate = RNA(n+1) + diphosphate. Its function is as follows. DNA-dependent RNA polymerase catalyzes the transcription of DNA into RNA using the four ribonucleoside triphosphates as substrates. In Mycobacterium marinum (strain ATCC BAA-535 / M), this protein is DNA-directed RNA polymerase subunit beta.